A 417-amino-acid polypeptide reads, in one-letter code: Serine hydroxymethyltransferase (417 aa).

Residues leucine 121 and 125–127 (GHL) each bind (6S)-5,6,7,8-tetrahydrofolate. N6-(pyridoxal phosphate)lysine is present on lysine 229. 354-356 (SPF) serves as a coordination point for (6S)-5,6,7,8-tetrahydrofolate.

Belongs to the SHMT family. In terms of assembly, homodimer. Pyridoxal 5'-phosphate is required as a cofactor.

The protein localises to the cytoplasm. The catalysed reaction is (6R)-5,10-methylene-5,6,7,8-tetrahydrofolate + glycine + H2O = (6S)-5,6,7,8-tetrahydrofolate + L-serine. Its pathway is one-carbon metabolism; tetrahydrofolate interconversion. The protein operates within amino-acid biosynthesis; glycine biosynthesis; glycine from L-serine: step 1/1. Functionally, catalyzes the reversible interconversion of serine and glycine with tetrahydrofolate (THF) serving as the one-carbon carrier. This reaction serves as the major source of one-carbon groups required for the biosynthesis of purines, thymidylate, methionine, and other important biomolecules. Also exhibits THF-independent aldolase activity toward beta-hydroxyamino acids, producing glycine and aldehydes, via a retro-aldol mechanism. The polypeptide is Serine hydroxymethyltransferase (Azotobacter vinelandii (strain DJ / ATCC BAA-1303)).